The chain runs to 672 residues: Hydrogenase-4 component B (672 aa).

At 1 to 5 (MDALQ) the chain is on the periplasmic side. The helical transmembrane segment at 6-26 (LLTWSLILYLFASLASLFLLG) threads the bilayer. Topologically, residues 27-30 (LDRL) are cytoplasmic. The chain crosses the membrane as a helical span at residues 31–51 (AIKLSGITSLVGGVIGIISGI). Topologically, residues 52–79 (TQLHAGVTLVARFAPPFEFADLTLRMDS) are periplasmic. A helical membrane pass occupies residues 80–100 (LSAFMVLVISLLVVVCSLYSL). The Cytoplasmic portion of the chain corresponds to 101–119 (TYMREYEGKGAAAMGFFMN). The chain crosses the membrane as a helical span at residues 120-140 (IFIASMVALLVMDNAFWFIVL). Topologically, residues 141-164 (FEMMSLSSWFLVIARQDKTSINAG) are periplasmic. The helical transmembrane segment at 165-185 (MLYFFIAHAGSVLIMIAFLLM) threads the bilayer. Residues 186 to 199 (GRESGSLDFASFRT) lie on the Cytoplasmic side of the membrane. Residues 200-220 (LSLSPGLASAVFLLAFFGFGA) form a helical membrane-spanning segment. Residues 221 to 242 (KAGMMPLHSWLPRAHPAAPSHA) lie on the Periplasmic side of the membrane. A helical membrane pass occupies residues 243–263 (SALMSGVMVKIGIFGILKVAM). The Cytoplasmic portion of the chain corresponds to 264–272 (DLLAQTGLP). A helical membrane pass occupies residues 273 to 293 (LWWGILVMAIGAISALLGVLY). The Periplasmic portion of the chain corresponds to 294–311 (ALAEQDIKRLLAWSTVEN). Residues 312–332 (VGIILLAVGVAMVGLSLHDPL) form a helical membrane-spanning segment. Residues 333–342 (LTVVGLLGAL) are Cytoplasmic-facing. The chain crosses the membrane as a helical span at residues 343–363 (FHLLNHALFKGLLFLGAGAII). The Periplasmic portion of the chain corresponds to 364-384 (SRLHTHDMEKMGALAKRMPWT). Residues 385-405 (AAACLIGCLAISAIPPLNGFI) form a helical membrane-spanning segment. The Cytoplasmic portion of the chain corresponds to 406 to 427 (SEWYTWQSLFSLSRVEAVALQL). A helical membrane pass occupies residues 428–448 (AGPIAMVMLAVTGGLAVMCFV). Topologically, residues 449–474 (KMYGITFCGAPRSTHAEEAQEVPNTM) are periplasmic. Residues 475–495 (IVAMLLLAALCVLIALSASWL) traverse the membrane as a helical segment. At 496–504 (APKIMHIAH) the chain is on the cytoplasmic side. Residues 505 to 525 (AFTNTPPATVASGIALVPGTF) form a helical membrane-spanning segment. Over 526 to 531 (HTQVTP) the chain is Periplasmic. Residues 532–552 (SLLLLLLLAMPLLPGLYWLWC) traverse the membrane as a helical segment. The Cytoplasmic segment spans residues 553 to 651 (RSRRAAFRRT…KEIQHLQSGD (99 aa)). A helical transmembrane segment spans residues 652 to 672 (FRLYCLYVVAALVVLLIAIAV).

Belongs to the complex I subunit 5 family.

The protein localises to the cell inner membrane. Functionally, possible component of hydrogenase 4. The protein is Hydrogenase-4 component B of Escherichia coli (strain K12).